The chain runs to 106 residues: SH3 domain-binding glutamic acid-rich-like protein 2-A (106 aa).

An SH3-binding motif is present at residues 61 to 67 (QGNPLPP).

Belongs to the SH3BGR family.

Its subcellular location is the nucleus. This chain is SH3 domain-binding glutamic acid-rich-like protein 2-A (sh3bgrl2-a), found in Xenopus laevis (African clawed frog).